The sequence spans 108 residues: Class I hydrophobin 3 (108 aa).

The first 17 residues, 1 to 17 (MFFQTTIVAALASLAVA), serve as a signal peptide directing secretion. 4 cysteine pairs are disulfide-bonded: cysteine 28–cysteine 87, cysteine 35–cysteine 81, cysteine 36–cysteine 69, and cysteine 88–cysteine 101. A glycan (N-linked (GlcNAc...) asparagine) is linked at asparagine 37.

The protein belongs to the fungal hydrophobin family. Self-assembles to form functional amyloid fibrils called rodlets. Self-assembly into fibrillar rodlets occurs spontaneously at hydrophobic:hydrophilic interfaces and the rodlets further associate laterally to form amphipathic monolayers.

It localises to the secreted. The protein localises to the cell wall. Aerial growth, conidiation, and dispersal of filamentous fungi in the environment rely upon a capability of their secreting small amphipathic proteins called hydrophobins (HPBs) with low sequence identity. Class I can self-assemble into an outermost layer of rodlet bundles on aerial cell surfaces, conferring cellular hydrophobicity that supports fungal growth, development and dispersal; whereas Class II form highly ordered films at water-air interfaces through intermolecular interactions but contribute nothing to the rodlet structure. Vmh3 is a class I hydrophobin that is essential for the maintenance of the surface hydrophobicity of the mycelium and might be involved in the development of fruiting bodies. Plays an important role in hyphal resistance against environmental stress. Necessary for the efficient biodegradation of lignin. This Pleurotus ostreatus (strain PC15) (Oyster mushroom) protein is Class I hydrophobin 3.